We begin with the raw amino-acid sequence, 420 residues long: uncharacterized protein (420 aa).

In terms of domain architecture, VWFA spans 43-215; sequence NLCLVLDHSG…HTFRQLFQRM (173 aa). The interval 389-420 is disordered; sequence LQSGEDLSEGDRKKTRMVSKTTLQPPSAPSEH.

This is an uncharacterized protein from Synechocystis sp. (strain ATCC 27184 / PCC 6803 / Kazusa).